Consider the following 63-residue polypeptide: Large ribosomal subunit protein uL30 (63 aa).

It belongs to the universal ribosomal protein uL30 family. Part of the 50S ribosomal subunit.

This Rickettsia prowazekii (strain Madrid E) protein is Large ribosomal subunit protein uL30.